Consider the following 81-residue polypeptide: Sulfur carrier protein TusA (81 aa).

The active-site Cysteine persulfide intermediate is the Cys-19.

Belongs to the sulfur carrier protein TusA family.

The protein localises to the cytoplasm. In terms of biological role, sulfur carrier protein which probably makes part of a sulfur-relay system. The protein is Sulfur carrier protein TusA of Shewanella oneidensis (strain ATCC 700550 / JCM 31522 / CIP 106686 / LMG 19005 / NCIMB 14063 / MR-1).